The sequence spans 316 residues: Aspartate carbamoyltransferase catalytic subunit (316 aa).

R60 and T61 together coordinate carbamoyl phosphate. K88 serves as a coordination point for L-aspartate. R110, H138, and Q141 together coordinate carbamoyl phosphate. Residues R171 and R225 each coordinate L-aspartate. Residues G266 and P267 each contribute to the carbamoyl phosphate site.

The protein belongs to the aspartate/ornithine carbamoyltransferase superfamily. ATCase family. As to quaternary structure, heterododecamer (2C3:3R2) of six catalytic PyrB chains organized as two trimers (C3), and six regulatory PyrI chains organized as three dimers (R2).

It catalyses the reaction carbamoyl phosphate + L-aspartate = N-carbamoyl-L-aspartate + phosphate + H(+). Its pathway is pyrimidine metabolism; UMP biosynthesis via de novo pathway; (S)-dihydroorotate from bicarbonate: step 2/3. In terms of biological role, catalyzes the condensation of carbamoyl phosphate and aspartate to form carbamoyl aspartate and inorganic phosphate, the committed step in the de novo pyrimidine nucleotide biosynthesis pathway. This Rhizorhabdus wittichii (strain DSM 6014 / CCUG 31198 / JCM 15750 / NBRC 105917 / EY 4224 / RW1) (Sphingomonas wittichii) protein is Aspartate carbamoyltransferase catalytic subunit.